The following is a 181-amino-acid chain: Inner membrane-spanning protein YciB (181 aa).

Helical transmembrane passes span 3-23 (LLFD…FGIY), 54-74 (SLAI…PWFI), 81-101 (IYWL…KPLI), 119-139 (LNLA…YVAY), and 149-169 (FKLF…AFYL).

This sequence belongs to the YciB family.

The protein resides in the cell inner membrane. Plays a role in cell envelope biogenesis, maintenance of cell envelope integrity and membrane homeostasis. The sequence is that of Inner membrane-spanning protein YciB from Legionella pneumophila (strain Corby).